Here is a 72-residue protein sequence, read N- to C-terminus: Heat-stable enterotoxin ST-IA/ST-P (72 aa).

A signal peptide spans 1 to 19 (MKKLMLAIFISVLSFPSFS). A propeptide spanning residues 20–54 (QSTESLDSSKEKITLETKKCDVVKNNSEKKSENMN) is cleaved from the precursor. 3 cysteine pairs are disulfide-bonded: cysteine 59-cysteine 64, cysteine 60-cysteine 68, and cysteine 63-cysteine 71.

The protein belongs to the heat-stable enterotoxin family.

The protein localises to the secreted. Functionally, toxin which activates the particulate form of guanylate cyclase and increases cyclic GMP levels within the host intestinal epithelial cells. This Escherichia coli protein is Heat-stable enterotoxin ST-IA/ST-P (sta1).